A 168-amino-acid chain; its full sequence is Lipoprotein signal peptidase (168 aa).

The next 4 helical transmembrane spans lie at Ser-5–Val-25, Leu-37–Ser-57, Phe-59–Ala-79, and Gly-85–Ile-105. Catalysis depends on residues Asp-115 and Asp-133. Residues Ser-125–Phe-145 form a helical membrane-spanning segment.

This sequence belongs to the peptidase A8 family.

The protein localises to the cell inner membrane. The catalysed reaction is Release of signal peptides from bacterial membrane prolipoproteins. Hydrolyzes -Xaa-Yaa-Zaa-|-(S,diacylglyceryl)Cys-, in which Xaa is hydrophobic (preferably Leu), and Yaa (Ala or Ser) and Zaa (Gly or Ala) have small, neutral side chains.. It functions in the pathway protein modification; lipoprotein biosynthesis (signal peptide cleavage). In terms of biological role, this protein specifically catalyzes the removal of signal peptides from prolipoproteins. This Mesorhizobium japonicum (strain LMG 29417 / CECT 9101 / MAFF 303099) (Mesorhizobium loti (strain MAFF 303099)) protein is Lipoprotein signal peptidase.